Reading from the N-terminus, the 125-residue chain is Small ribosomal subunit protein uS12 (125 aa).

The tract at residues Met1–Ala23 is disordered. 3-methylthioaspartic acid is present on Asp89. The segment at Ala102 to Lys125 is disordered. Positions Arg111 to Lys125 are enriched in basic residues.

This sequence belongs to the universal ribosomal protein uS12 family. Part of the 30S ribosomal subunit. Contacts proteins S8 and S17. May interact with IF1 in the 30S initiation complex.

Its function is as follows. With S4 and S5 plays an important role in translational accuracy. In terms of biological role, interacts with and stabilizes bases of the 16S rRNA that are involved in tRNA selection in the A site and with the mRNA backbone. Located at the interface of the 30S and 50S subunits, it traverses the body of the 30S subunit contacting proteins on the other side and probably holding the rRNA structure together. The combined cluster of proteins S8, S12 and S17 appears to hold together the shoulder and platform of the 30S subunit. The polypeptide is Small ribosomal subunit protein uS12 (Halorhodospira halophila (strain DSM 244 / SL1) (Ectothiorhodospira halophila (strain DSM 244 / SL1))).